The following is a 152-amino-acid chain: Prefoldin subunit alpha (152 aa).

Positions 110 to 152 are disordered; sequence ETQEEVDELESESQELEQQAQQMQQQMQQQQMQQMQQSQGDEE. Acidic residues predominate over residues 111 to 124; it reads TQEEVDELESESQE. Positions 125–152 are enriched in low complexity; sequence LEQQAQQMQQQMQQQQMQQMQQSQGDEE.

Belongs to the prefoldin alpha subunit family. Heterohexamer of two alpha and four beta subunits.

It is found in the cytoplasm. Functionally, molecular chaperone capable of stabilizing a range of proteins. Seems to fulfill an ATP-independent, HSP70-like function in archaeal de novo protein folding. This chain is Prefoldin subunit alpha, found in Halorubrum lacusprofundi (strain ATCC 49239 / DSM 5036 / JCM 8891 / ACAM 34).